A 333-amino-acid chain; its full sequence is Phosphate acyltransferase (333 aa).

The protein belongs to the PlsX family. In terms of assembly, homodimer. Probably interacts with PlsY.

The protein resides in the cytoplasm. It catalyses the reaction a fatty acyl-[ACP] + phosphate = an acyl phosphate + holo-[ACP]. The protein operates within lipid metabolism; phospholipid metabolism. Its function is as follows. Catalyzes the reversible formation of acyl-phosphate (acyl-PO(4)) from acyl-[acyl-carrier-protein] (acyl-ACP). This enzyme utilizes acyl-ACP as fatty acyl donor, but not acyl-CoA. The chain is Phosphate acyltransferase from Helicobacter hepaticus (strain ATCC 51449 / 3B1).